The following is a 584-amino-acid chain: Beta-(1--&gt;2)glucan export ATP-binding/permease protein NdvA (584 aa).

The ABC transmembrane type-1 domain maps to valine 21–glutamate 301. The next 6 helical transmembrane spans lie at isoleucine 29–isoleucine 49, aspartate 57–alanine 77, threonine 136–valine 156, leucine 158–aspartate 178, isoleucine 248–glycine 268, and valine 272–methionine 292. The ABC transporter domain maps to valine 335–threonine 569. Residue glycine 368–threonine 375 coordinates ATP.

It belongs to the ABC transporter superfamily. Beta-(1--&gt;2)glucan exporter (TC 3.A.1.108.1) family. Homodimer.

The protein localises to the cell inner membrane. It catalyses the reaction [(1-&gt;2)-beta-D-glucosyl](n)(in) + ATP + H2O = [(1-&gt;2)-beta-D-glucosyl](n)(out) + ADP + phosphate + H(+). Its function is as follows. Involved in beta-(1--&gt;2)glucan export. Transmembrane domains (TMD) form a pore in the inner membrane and the ATP-binding domain (NBD) is responsible for energy generation. The chain is Beta-(1--&gt;2)glucan export ATP-binding/permease protein NdvA from Agrobacterium vitis (Rhizobium vitis).